Consider the following 158-residue polypeptide: Arginine repressor (158 aa).

It belongs to the ArgR family.

Its subcellular location is the cytoplasm. The protein operates within amino-acid biosynthesis; L-arginine biosynthesis [regulation]. Functionally, regulates arginine biosynthesis genes. The sequence is that of Arginine repressor from Phocaeicola vulgatus (strain ATCC 8482 / DSM 1447 / JCM 5826 / CCUG 4940 / NBRC 14291 / NCTC 11154) (Bacteroides vulgatus).